Reading from the N-terminus, the 247-residue chain is Probable transcriptional regulatory protein Dalk_2958 (247 aa).

This sequence belongs to the TACO1 family.

It localises to the cytoplasm. The protein is Probable transcriptional regulatory protein Dalk_2958 of Desulfatibacillum aliphaticivorans.